A 1415-amino-acid chain; its full sequence is DNA-directed RNA polymerase subunit beta' (1415 aa).

Zn(2+) contacts are provided by Cys-72, Cys-74, Cys-87, and Cys-90. Mg(2+) contacts are provided by Asp-463, Asp-465, and Asp-467. Cys-811, Cys-885, Cys-892, and Cys-895 together coordinate Zn(2+).

It belongs to the RNA polymerase beta' chain family. The RNAP catalytic core consists of 2 alpha, 1 beta, 1 beta' and 1 omega subunit. When a sigma factor is associated with the core the holoenzyme is formed, which can initiate transcription. Requires Mg(2+) as cofactor. Zn(2+) is required as a cofactor.

The enzyme catalyses RNA(n) + a ribonucleoside 5'-triphosphate = RNA(n+1) + diphosphate. Its function is as follows. DNA-dependent RNA polymerase catalyzes the transcription of DNA into RNA using the four ribonucleoside triphosphates as substrates. In Cereibacter sphaeroides (strain ATCC 17029 / ATH 2.4.9) (Rhodobacter sphaeroides), this protein is DNA-directed RNA polymerase subunit beta'.